The primary structure comprises 185 residues: Pap fimbrial major pilin protein (185 aa).

The N-terminal stretch at Met1–Ala22 is a signal peptide. Cys44 and Cys83 are oxidised to a cystine.

It belongs to the fimbrial protein family.

The protein resides in the secreted. It is found in the fimbrium. Its function is as follows. Polymerizes to form the thick (6.8 nm in diameter) rod of the pilus (also called fimbria). The rod is a right-handed helical cylinder with 3.28 PapA subunits per turn. Pili are polar filaments radiating from the surface of the bacterium to a length of 0.5-1.5 micrometers and numbering 100-300 per cell, and enable bacteria to colonize the epithelium of specific host organs. This Escherichia coli protein is Pap fimbrial major pilin protein (papA).